The chain runs to 220 residues: ATP-dependent dethiobiotin synthetase BioD (220 aa).

11–16 is an ATP binding site; it reads GVGKTF. Thr15 provides a ligand contact to Mg(2+). The active site involves Lys36. Position 40 (Thr40) interacts with substrate. ATP contacts are provided by residues Asp48 and 107–110; that span reads EGAG. Asp48 and Glu107 together coordinate Mg(2+).

Belongs to the dethiobiotin synthetase family. As to quaternary structure, homodimer. The cofactor is Mg(2+).

The protein resides in the cytoplasm. It catalyses the reaction (7R,8S)-7,8-diammoniononanoate + CO2 + ATP = (4R,5S)-dethiobiotin + ADP + phosphate + 3 H(+). The protein operates within cofactor biosynthesis; biotin biosynthesis; biotin from 7,8-diaminononanoate: step 1/2. Functionally, catalyzes a mechanistically unusual reaction, the ATP-dependent insertion of CO2 between the N7 and N8 nitrogen atoms of 7,8-diaminopelargonic acid (DAPA, also called 7,8-diammoniononanoate) to form a ureido ring. The polypeptide is ATP-dependent dethiobiotin synthetase BioD (Aquifex aeolicus (strain VF5)).